A 199-amino-acid polypeptide reads, in one-letter code: Outer-membrane lipoprotein LolB (199 aa).

The signal sequence occupies residues 1-28; the sequence is MSACPAPRSPVRWLHAFTLFLLLAVLAG. Residue Cys29 is the site of N-palmitoyl cysteine attachment. The S-diacylglycerol cysteine moiety is linked to residue Cys29.

The protein belongs to the LolB family. As to quaternary structure, monomer.

The protein resides in the cell outer membrane. In terms of biological role, plays a critical role in the incorporation of lipoproteins in the outer membrane after they are released by the LolA protein. This Bordetella pertussis (strain Tohama I / ATCC BAA-589 / NCTC 13251) protein is Outer-membrane lipoprotein LolB.